A 267-amino-acid chain; its full sequence is MTAVGEALRRCRAEGRAALVGYLPACFPDVERGIANLQALLDGGVDILEIGLPYSDPVLDGPVIARAADVALRAGSTTAAVLRTLEAVAASGAAAVIMTYWNPVEQYGVDRFAAAVAAAGGSGLVTPDLLPDEAEAWLAASDAHGLDRIFLVAPSSTDERIALTVRFCRGFVYAASVMGVTGVRERASVQAPELVARVRRYTSLPVGVGLGVGTAEQAAEVAQYADAVIVGSAFVRCVFDAGDDAPAALRKLAADLAAGVRRMPATG.

Active-site proton acceptor residues include glutamate 49 and aspartate 60.

Belongs to the TrpA family. Tetramer of two alpha and two beta chains.

The enzyme catalyses (1S,2R)-1-C-(indol-3-yl)glycerol 3-phosphate + L-serine = D-glyceraldehyde 3-phosphate + L-tryptophan + H2O. It functions in the pathway amino-acid biosynthesis; L-tryptophan biosynthesis; L-tryptophan from chorismate: step 5/5. In terms of biological role, the alpha subunit is responsible for the aldol cleavage of indoleglycerol phosphate to indole and glyceraldehyde 3-phosphate. The sequence is that of Tryptophan synthase alpha chain from Acidothermus cellulolyticus (strain ATCC 43068 / DSM 8971 / 11B).